Reading from the N-terminus, the 217-residue chain is Probable rhamnogalacturonan acetylesterase YesY (217 aa).

Ser-11 (nucleophile) is an active-site residue. Catalysis depends on residues Glu-178 and His-185.

This sequence belongs to the 'GDSL' lipolytic enzyme family.

Functionally, may play a role in the degradation of rhamnogalacturonan derived from plant cell walls. Probably has broad substrate specificity and may degrade several types of acetylated substrates. The polypeptide is Probable rhamnogalacturonan acetylesterase YesY (yesY) (Bacillus subtilis (strain 168)).